A 492-amino-acid polypeptide reads, in one-letter code: Probable cobyric acid synthase (492 aa).

The 193-residue stretch at 252–444 (PIEVNIVKFS…FHGILENFEF (193 aa)) folds into the GATase cobBQ-type domain. Cys-330 acts as the Nucleophile in catalysis. The active site involves His-436.

Belongs to the CobB/CobQ family. CobQ subfamily.

Its pathway is cofactor biosynthesis; adenosylcobalamin biosynthesis. In terms of biological role, catalyzes amidations at positions B, D, E, and G on adenosylcobyrinic A,C-diamide. NH(2) groups are provided by glutamine, and one molecule of ATP is hydrogenolyzed for each amidation. This is Probable cobyric acid synthase from Methanococcus maripaludis (strain C6 / ATCC BAA-1332).